We begin with the raw amino-acid sequence, 415 residues long: M protein, serotype 6 (415 aa).

The signal sequence occupies residues 1-42; that stretch reads MAKNNTNRHYSLRKLKKGTASVAVALSVIGAGLVVNTNEVSA. 2 coiled-coil regions span residues 54–133 and 170–340; these read DKAR…LKKI and EASR…GKAS. A run of 3 repeats spans residues 69 to 75, 76 to 82, and 83 to 89. The 5 X 7 AA approximate tandem repeats of [KMNR]-L-[TQ]-[TDA]-[ENQ]-N-[NDK] stretch occupies residues 69–103; sequence MLQANNDKLTTENKNLTDQNKELKAEENRLTTENK. A compositionally biased stretch (polar residues) spans 75 to 86; the sequence is DKLTTENKNLTD. Disordered regions lie at residues 75 to 125, 157 to 189, 202 to 231, and 247 to 277; these read DKLT…ESKE, QELA…AKKQ, DKVK…AKKQ, and KEEK…VEKA. Basic and acidic residues-rich tracts occupy residues 87 to 100, 108 to 125, and 158 to 189; these read QNKE…RLTT, KLSE…ESKE, and ELAK…AKKQ. Residues 90-96 form a 4; approximate repeat; it reads ELKAEEN. Repeat unit 5 spans residues 97–103; the sequence is RLTTENK. C repeat units lie at residues 160-194, 202-236, and 244-278; these read AKKD…EKDL, DKVK…EKDL, and DKVK…EKAL. The segment at 211–279 is binding to CD46; it reads SDASRKGLRR…AKKQVEKALE (69 aa). The two directly repeated 27 amino acid blocks separated by 15 amino acids stretch occupies residues 211-279; the sequence is SDASRKGLRR…AKKQVEKALE (69 aa). Positions 260 to 277 are enriched in basic and acidic residues; that stretch reads LRRDLDASREAKKQVEKA. Residues 280–343 form a hydrophilic region; sequence EANSKLAALE…LRAGKASDSQ (64 aa). D repeat units lie at residues 311–316, 317–322, 325–330, and 332–337; these read AKLEAE, AKALKE, AKQAEE, and AKLRAG. A disordered region spans residues 332–387; that stretch reads AKLRAGKASDSQTPDAKPGNKVVPGKGQAPQAGTKPNQNKAPMKETKRQLPSTGET. The LPXTG sorting signal motif lies at 381–385; it reads LPSTG. Threonine 384 carries the pentaglycyl murein peptidoglycan amidated threonine modification. A propeptide spans 385–415 (removed by sortase); sequence GETANPFFTAAALTVMATAGVAAVVKRKEEN.

It belongs to the M protein family.

The protein resides in the secreted. It localises to the cell wall. Its function is as follows. Mediates the attachment of S.pyogenes to skin epithelial cells through the binding of the human membrane cofactor protein CD46. Also binds to the factor H and factor H-like protein 1. These interactions could contribute to the fact that the M6 protein protects the bacterium from the phagocytosis by regulating the complement activation on the bacterial surface. This chain is M protein, serotype 6 (emm6), found in Streptococcus pyogenes serotype M6 (strain ATCC BAA-946 / MGAS10394).